The following is a 441-amino-acid chain: Serine--tRNA ligase (441 aa).

250–252 provides a ligand contact to L-serine; that stretch reads TSE. ATP contacts are provided by residues 281–283 and Val-297; that span reads RRE. Glu-304 provides a ligand contact to L-serine. 368-371 provides a ligand contact to ATP; the sequence is EIVS. Thr-402 lines the L-serine pocket.

This sequence belongs to the class-II aminoacyl-tRNA synthetase family. Type-1 seryl-tRNA synthetase subfamily. In terms of assembly, homodimer. The tRNA molecule binds across the dimer.

It is found in the cytoplasm. It catalyses the reaction tRNA(Ser) + L-serine + ATP = L-seryl-tRNA(Ser) + AMP + diphosphate + H(+). The catalysed reaction is tRNA(Sec) + L-serine + ATP = L-seryl-tRNA(Sec) + AMP + diphosphate + H(+). It functions in the pathway aminoacyl-tRNA biosynthesis; selenocysteinyl-tRNA(Sec) biosynthesis; L-seryl-tRNA(Sec) from L-serine and tRNA(Sec): step 1/1. Catalyzes the attachment of serine to tRNA(Ser). Is also able to aminoacylate tRNA(Sec) with serine, to form the misacylated tRNA L-seryl-tRNA(Sec), which will be further converted into selenocysteinyl-tRNA(Sec). The chain is Serine--tRNA ligase from Thermoplasma volcanium (strain ATCC 51530 / DSM 4299 / JCM 9571 / NBRC 15438 / GSS1).